A 366-amino-acid chain; its full sequence is Aminomethyltransferase (366 aa).

It belongs to the GcvT family. In terms of assembly, the glycine cleavage system is composed of four proteins: P, T, L and H.

The catalysed reaction is N(6)-[(R)-S(8)-aminomethyldihydrolipoyl]-L-lysyl-[protein] + (6S)-5,6,7,8-tetrahydrofolate = N(6)-[(R)-dihydrolipoyl]-L-lysyl-[protein] + (6R)-5,10-methylene-5,6,7,8-tetrahydrofolate + NH4(+). In terms of biological role, the glycine cleavage system catalyzes the degradation of glycine. The sequence is that of Aminomethyltransferase from Bacillus velezensis (strain DSM 23117 / BGSC 10A6 / LMG 26770 / FZB42) (Bacillus amyloliquefaciens subsp. plantarum).